A 101-amino-acid chain; its full sequence is Ubiquitin-related modifier 1 (101 aa).

Gly-101 carries the 1-thioglycine modification. Gly-101 is covalently cross-linked (Glycyl lysine isopeptide (Gly-Lys) (interchain with K-? in acceptor proteins)).

This sequence belongs to the URM1 family. C-terminal thiocarboxylation occurs in 2 steps, it is first acyl-adenylated (-COAMP) via the hesA/moeB/thiF part of the MOCS3 homolog, then thiocarboxylated (-COSH) via the rhodanese domain of the MOCS3 homolog.

It is found in the cytoplasm. Its pathway is tRNA modification; 5-methoxycarbonylmethyl-2-thiouridine-tRNA biosynthesis. Functionally, acts as a sulfur carrier required for 2-thiolation of mcm(5)S(2)U at tRNA wobble positions of cytosolic tRNA(Lys), tRNA(Glu) and tRNA(Gln). Serves as sulfur donor in tRNA 2-thiolation reaction by being thiocarboxylated (-COSH) at its C-terminus by MOCS3. The sulfur is then transferred to tRNA to form 2-thiolation of mcm(5)S(2)U. Also acts as a ubiquitin-like protein (UBL) that is covalently conjugated via an isopeptide bond to lysine residues of target proteins. The thiocarboxylated form serves as substrate for conjugation and oxidative stress specifically induces the formation of UBL-protein conjugates. This chain is Ubiquitin-related modifier 1, found in Gallus gallus (Chicken).